Reading from the N-terminus, the 618-residue chain is MAKHTFQTEVNQLLDLMIHSLYSNKEIFLRELISNASDALEKLQYLTLTDENLKNLQYTPRIDIHFDEEKKILTLSDTGIGMNESDLVENLGTIAKSGTKSFVSRLSGDKKKDSALIGQFGVGFYAAFMVADKIVVTTKKAGEESAYAWLSEGKGDYEITPCSKESHGTEIKLFLKEEEKEFASRWRLEEIIKKYSDHIPFPIFLHYTQKKNDQEESKEEQVNKAFALWRISKNELKEEDYKEFYKSLSHDSHDPLAWVHIKVEGSQEYTTLFYLPSKAPFDLYRVDYRSGVKLYVKRVFITDDDKELLPSYLRFVRGIIDSEDLPLNVSREILQQNRILANIKSASTKKILAEIENLAKDEEKYEAFFKEFGRALKEGLYGDFENKEKLLELMRFHSSLSPNKKISLQSYKERMKEGQKAIYYLMGENADLLQNSPLLEKFKKREIEVLFFDEEIDSIVMPMVNQYGDLPLKAINSAEADKDFEEESVSEEEKERFKPLLERFEKALSGEIKSVRLSKRLVDSPACVVADEDDPNFAMIKMMRQMGNALGDFPEPKPILELNPEHPMVGKLLALEDEERASDYAHLLLDQAKLLESGSLKDAVGFAKRLNAMLERAI.

An a; substrate-binding region spans residues 1 to 331; it reads MAKHTFQTEV…SEDLPLNVSR (331 aa). Positions 332–541 are b; it reads EILQQNRILA…EDDPNFAMIK (210 aa). A c region spans residues 542 to 618; the sequence is MMRQMGNALG…RLNAMLERAI (77 aa).

This sequence belongs to the heat shock protein 90 family. In terms of assembly, homodimer.

The protein resides in the cytoplasm. In terms of biological role, molecular chaperone. Has ATPase activity. The protein is Chaperone protein HtpG of Wolinella succinogenes (strain ATCC 29543 / DSM 1740 / CCUG 13145 / JCM 31913 / LMG 7466 / NCTC 11488 / FDC 602W) (Vibrio succinogenes).